A 419-amino-acid polypeptide reads, in one-letter code: UDP-N-acetylglucosamine 1-carboxyvinyltransferase 2 (419 aa).

22-23 (KN) is a binding site for phosphoenolpyruvate. Arg92 provides a ligand contact to UDP-N-acetyl-alpha-D-glucosamine. The active-site Proton donor is the Cys116. A 2-(S-cysteinyl)pyruvic acid O-phosphothioketal modification is found at Cys116. UDP-N-acetyl-alpha-D-glucosamine-binding positions include 121 to 125 (RPIDL), Asp306, and Ile328.

The protein belongs to the EPSP synthase family. MurA subfamily.

The protein localises to the cytoplasm. It carries out the reaction phosphoenolpyruvate + UDP-N-acetyl-alpha-D-glucosamine = UDP-N-acetyl-3-O-(1-carboxyvinyl)-alpha-D-glucosamine + phosphate. The protein operates within cell wall biogenesis; peptidoglycan biosynthesis. Cell wall formation. Adds enolpyruvyl to UDP-N-acetylglucosamine. In Streptococcus mutans serotype c (strain ATCC 700610 / UA159), this protein is UDP-N-acetylglucosamine 1-carboxyvinyltransferase 2.